Reading from the N-terminus, the 455-residue chain is J protein JJJ2 (455 aa).

In terms of domain architecture, J spans 12 to 76; sequence TYYSILGVPT…QLRAEYDKKL (65 aa). Residues 104–241 are disordered; sequence RNSKPYEQQP…RKKSEKKATP (138 aa). A compositionally biased stretch (low complexity) spans 133 to 144; sequence NSNPHNENSSNN. The segment covering 156–168 has biased composition (basic and acidic residues); that stretch reads TLSKDSEDKHGTD.

It is found in the cytoplasm. The protein localises to the nucleus. This is J protein JJJ2 (JJJ2) from Candida glabrata (strain ATCC 2001 / BCRC 20586 / JCM 3761 / NBRC 0622 / NRRL Y-65 / CBS 138) (Yeast).